Reading from the N-terminus, the 534-residue chain is NAD(P)H-quinone oxidoreductase chain 4 (534 aa).

A run of 14 helical transmembrane segments spans residues 12–32 (FPWL…IPFF), 44–64 (FALS…INGF), 96–116 (MPLI…AWPV), 120–140 (PKLF…VFAV), 144–164 (LLFF…LAIW), 176–196 (FIIY…AMGF), 220–240 (ILCY…VPLH), 251–271 (TAPV…YALL), 285–305 (FAPL…LTSF), 314–334 (IAYS…SFSS), 340–360 (AMLQ…LVGA), 384–404 (FALW…SGFV), 425–445 (VVMA…LLSM), and 472–492 (VYII…PRLV).

It belongs to the complex I subunit 4 family.

It localises to the cellular thylakoid membrane. The catalysed reaction is a plastoquinone + NADH + (n+1) H(+)(in) = a plastoquinol + NAD(+) + n H(+)(out). It carries out the reaction a plastoquinone + NADPH + (n+1) H(+)(in) = a plastoquinol + NADP(+) + n H(+)(out). Its function is as follows. NDH-1 shuttles electrons from NAD(P)H, via FMN and iron-sulfur (Fe-S) centers, to quinones in the respiratory chain. The immediate electron acceptor for the enzyme in this species is believed to be plastoquinone. Couples the redox reaction to proton translocation (for every two electrons transferred, four hydrogen ions are translocated across the cytoplasmic membrane), and thus conserves the redox energy in a proton gradient. This is NAD(P)H-quinone oxidoreductase chain 4 from Prochlorococcus marinus (strain AS9601).